The primary structure comprises 349 residues: Cytokine response-modifying protein B (349 aa).

Positions 1 to 22 are cleaved as a signal peptide; that stretch reads MKSVLYLYILFLSCIIINGRDA. The segment at 1–160 is TNF-binding; sequence MKSVLYLYIL…SPCGFGTYSH (160 aa). TNFR-Cys repeat units follow at residues 31–66 and 67–108; these read KCKDTEYKRHNLCCLSCPPGTYASRLCDSKTNTQCT and PCGS…NRIC. 6 disulfides stabilise this stretch: Cys-32–Cys-43, Cys-44–Cys-57, Cys-47–Cys-65, Cys-68–Cys-83, Cys-86–Cys-100, and Cys-90–Cys-108. Asn-101, Asn-173, Asn-189, Asn-215, and Asn-248 each carry an N-linked (GlcNAc...) asparagine; by host glycan. The segment at 161–349 is chemokine-binding; that stretch reads TVSSADKCEP…ITNSKPTRFL (189 aa).

It belongs to the orthopoxvirus OPG002 family. In terms of assembly, homodimer. Interacts with host TNF, LTA, CCL28, CCL25, CXCL12, CXCL13 and CXCl14.

The protein resides in the secreted. Its function is as follows. Inhibits host immune defense by binding to host TNF and various chemokines in the extracellular space. Binds host CC chemokines (beta chemokines) and CXC chemokines (alpha chemokines). This is Cytokine response-modifying protein B (OPG002) from Variola virus (isolate Human/India/Ind3/1967) (VARV).